The sequence spans 54 residues: Protein PIGBOS1 (54 aa).

At 1 to 4 (MFRR) the chain is on the mitochondrial intermembrane side. Residues 5 to 25 (LTFAQLLFATVLGIAGGVYIF) form a helical membrane-spanning segment. Over 26 to 54 (QPVFEQYAKDQKELKEKMQLVQESEEKKS) the chain is Cytoplasmic. The required for interaction with CLCC1 stretch occupies residues 30-36 (EQYAKDQ).

Homooligomer. Interacts (via C-terminus) with endoplasmic reticulum (ER) protein CLCC1; the interaction occurs at the mitochondria-associated ER membrane, a zone of contact between the ER and mitochondrial membranes, but does not appear to play a role in ER-mitochondria tethering and is not affected by ER stress.

Its subcellular location is the mitochondrion outer membrane. Its function is as follows. Plays a role in regulation of the unfolded protein response triggered by endoplasmic reticulum (ER) stress resulting from the presence of unfolded proteins in the ER lumen. This chain is Protein PIGBOS1, found in Homo sapiens (Human).